A 1712-amino-acid polypeptide reads, in one-letter code: Gag-Pol polyprotein (1712 aa).

Gly2 carries the N-myristoyl glycine; by host lipid modification. Disordered stretches follow at residues 97 to 208 (VRPF…NRPQ), 416 to 440 (RETPEEREERLWQRQEERDKKRHKE), and 487 to 518 (DCPKRPRKKPANSTLLNLGDQESQGQDPPPEP). A compositionally biased stretch (pro residues) spans 100-119 (FLPPPKPPTPLPQPLSPQPS). Residues 107–110 (PTPL) carry the PTAP/PSAP motif motif. Positions 120–132 (APLTSSLYPVLPK) are enriched in low complexity. An LYPX(n)L motif motif is present at residues 126 to 130 (LYPVL). Composition is skewed to pro residues over residues 136–146 (PKPPVLPPDPS) and 156–171 (EPPPYPGGHGPPPSGP). The PPXY motif motif lies at 157 to 160 (PPPY). Residues 416–434 (RETPEEREERLWQRQEERD) show a composition bias toward basic and acidic residues. The CCHC-type zinc-finger motif lies at 473–490 (DQCAYCKEKGHWVRDCPK). Positions 497–512 (ANSTLLNLGDQESQGQ) are enriched in polar residues. Residues 529–599 (VTFLVDTGAQ…CPYPLLGRDL (71 aa)) form the Peptidase A2 domain. The Protease; shared with dimeric partner role is filled by Asp534. Residues 708-899 (LDQGILKPCQ…QEVTYLGYSL (192 aa)) form the Reverse transcriptase domain. Residues Asp776, Asp850, Asp851, Asp1150, Glu1188, Asp1209, and Asp1279 each contribute to the Mg(2+) site. In terms of domain architecture, RNase H type-1 spans 1141 to 1287 (PDADLTWYTD…ADDTAKKAAT (147 aa)). The disordered stretch occupies residues 1262–1289 (PGHQKGDSPQAKGNRLADDTAKKAATET). A compositionally biased stretch (basic and acidic residues) spans 1276-1287 (RLADDTAKKAAT). The HHCC-type zinc-finger motif lies at 1354-1394 (HKLTHLSARKMKTLLEREETGFYLPNRDLHLRQVTESCRAC). In terms of domain architecture, Integrase catalytic spans 1411 to 1569 (RGRRPGTHWE…TPFEILYGAP (159 aa)). Positions 1422 and 1481 each coordinate Mg(2+). Residues 1676-1703 (GPTTNQDLSDSPSSDDPSRWKVQRTQNP) are disordered.

The protein belongs to the retroviral Pol polyprotein family. As to quaternary structure, homohexamer; further associates as homomultimer. The virus core is composed of a lattice formed from hexagonal rings, each containing six capsid monomers. Interacts (via PPXY motif) with host NEDD4. Interacts (via PSAP motif) with host TSG101. Interacts (via LYPX(n)L motif) with host PDCD6IP. In terms of assembly, the reverse transcriptase is a monomer (Potential). Interacts (via RNase domains) with host release factor ETF1; this interaction is essential for translational readthrough of amber codon between viral gag and pol genes, as well as for viral replication. As to quaternary structure, homodimer. Mg(2+) serves as cofactor. Post-translationally, specific enzymatic cleavages by the viral protease yield mature proteins. The protease is released by autocatalytic cleavage. The polyprotein is cleaved during and after budding, this process is termed maturation. Phosphorylated on serine residues.

The protein localises to the virion. It is found in the host cell membrane. It localises to the host late endosome membrane. The protein resides in the host endosome. Its subcellular location is the host multivesicular body. The protein localises to the host cytoplasm. It carries out the reaction DNA(n) + a 2'-deoxyribonucleoside 5'-triphosphate = DNA(n+1) + diphosphate. The enzyme catalyses Endonucleolytic cleavage to 5'-phosphomonoester.. Most efficiently inhibited by Amprenavir, which is able to block Gag-Pol processing in infected cells. In terms of biological role, plays a role in budding and is processed by the viral protease during virion maturation outside the cell. During budding, it recruits, in a PPXY-dependent or independent manner, Nedd4-like ubiquitin ligases that conjugate ubiquitin molecules to Gag-Pol, or to Gag-Pol binding host factors. Interaction with HECT ubiquitin ligases probably links the viral protein to the host ESCRT pathway and facilitates release. Functionally, targets Gag and gag-pol polyproteins to the plasma membrane via a multipartite membrane binding signal, that includes its myristoylated N-terminus. Also mediates nuclear localization of the pre-integration complex. Constituent of the pre-integration complex (PIC) which tethers the latter to mitotic chromosomes. This allows the integration of the viral genome into the host DNA. Its function is as follows. Forms the spherical core of the virion that encapsulates the genomic RNA-nucleocapsid complex. In terms of biological role, involved in the packaging and encapsidation of two copies of the genome. Binds with high affinity to conserved UCUG elements within the packaging signal, located near the 5'-end of the genome. This binding is dependent on genome dimerization. Acts as a nucleic acid chaperone which is involved in rearrangement of nucleic acid secondary structures during gRNA retrotranscription. Functionally, the aspartyl protease mediates proteolytic cleavages of Gag and Gag-Pol polyproteins during or shortly after the release of the virion from the plasma membrane. Cleavages take place as an ordered, step-wise cascade to yield mature proteins. This process is called maturation. Displays maximal activity during the budding process just prior to particle release from the cell. RT is a multifunctional enzyme that converts the viral dimeric RNA genome into dsDNA in the cytoplasm, shortly after virus entry into the cell. This enzyme displays a DNA polymerase activity that can copy either DNA or RNA templates, and a ribonuclease H (RNase H) activity that cleaves the RNA strand of RNA-DNA heteroduplexes in a partially processive 3' to 5' endonucleasic mode. Conversion of viral genomic RNA into dsDNA requires many steps. A tRNA binds to the primer-binding site (PBS) situated at the 5' end of the viral RNA. RT uses the 3' end of the tRNA primer to perform a short round of RNA-dependent minus-strand DNA synthesis. The reading proceeds through the U5 region and ends after the repeated (R) region which is present at both ends of viral RNA. The portion of the RNA-DNA heteroduplex is digested by the RNase H, resulting in a ssDNA product attached to the tRNA primer. This ssDNA/tRNA hybridizes with the identical R region situated at the 3' end of viral RNA. This template exchange, known as minus-strand DNA strong stop transfer, can be either intra- or intermolecular. RT uses the 3' end of this newly synthesized short ssDNA to perform the RNA-dependent minus-strand DNA synthesis of the whole template. RNase H digests the RNA template except for a polypurine tract (PPT) situated at the 5' end of the genome. It is not clear if both polymerase and RNase H activities are simultaneous. RNase H probably can proceed both in a polymerase-dependent (RNA cut into small fragments by the same RT performing DNA synthesis) and a polymerase-independent mode (cleavage of remaining RNA fragments by free RTs). Secondly, RT performs DNA-directed plus-strand DNA synthesis using the PPT that has not been removed by RNase H as primers. PPT and tRNA primers are then removed by RNase H. The 3' and 5' ssDNA PBS regions hybridize to form a circular dsDNA intermediate. Strand displacement synthesis by RT to the PBS and PPT ends produces a blunt ended, linear dsDNA copy of the viral genome that includes long terminal repeats (LTRs) at both ends. Its function is as follows. Catalyzes viral DNA integration into the host chromosome, by performing a series of DNA cutting and joining reactions. This enzyme activity takes place after virion entry into a cell and reverse transcription of the RNA genome in dsDNA. The first step in the integration process is 3' processing. This step requires a complex comprising the viral genome, matrix protein and integrase. This complex is called the pre-integration complex (PIC). The integrase protein removes 2 nucleotides from each 3' end of the viral DNA, leaving recessed CA OH's at the 3' ends. In the second step that requires cell division, the PIC enters cell nucleus. In the third step, termed strand transfer, the integrase protein joins the previously processed 3' ends to the 5' ends of strands of target cellular DNA at the site of integration. The last step is viral DNA integration into host chromosome. The protein is Gag-Pol polyprotein (pol) of Feline leukemia virus.